We begin with the raw amino-acid sequence, 736 residues long: NADPH--cytochrome P450 reductase (736 aa).

Residue Met1 is a topological domain, lumenal. The helical transmembrane segment at 2–24 (AVSSSSDVIVLSVGIILAALYLF) threads the bilayer. The Cytoplasmic segment spans residues 25-736 (REQIFSAAKP…RNRLLLDVWS (712 aa)). Positions 66–216 (IVIFYGSQTG…DYLEWKDGMW (151 aa)) constitute a Flavodoxin-like domain. Residues 72-77 (SQTGTA), 123-126 (ATYG), 165-174 (LGNKTYEHYN), and Asp200 contribute to the FMN site. The 278-residue stretch at 269–546 (KNPYPAPIIA…EGPRGAYKQG (278 aa)) folds into the FAD-binding FR-type domain. Arg289 contributes to the NADP(+) binding site. Residues 456 to 459 (RYYS), 474 to 476 (TVV), Tyr480, and 495 to 498 (GVGS) each bind FAD. Residues Thr577, 648 to 649 (SR), and 659 to 663 (KIYVQ) contribute to the NADP(+) site. Trp735 lines the FAD pocket.

This sequence belongs to the NADPH--cytochrome P450 reductase family. It in the N-terminal section; belongs to the flavodoxin family. The protein in the C-terminal section; belongs to the flavoprotein pyridine nucleotide cytochrome reductase family. FAD is required as a cofactor. The cofactor is FMN.

The protein resides in the endoplasmic reticulum membrane. It is found in the mitochondrion outer membrane. It localises to the cell membrane. The catalysed reaction is 2 oxidized [cytochrome P450] + NADPH = 2 reduced [cytochrome P450] + NADP(+) + H(+). Functionally, this enzyme is required for electron transfer from NADP to cytochrome P450 in microsomes. It can also provide electron transfer to heme oxygenase and cytochrome B5. Involved in ergosterol biosynthesis. This is NADPH--cytochrome P450 reductase (CPR) from Phanerodontia chrysosporium (White-rot fungus).